The primary structure comprises 409 residues: Imidazolonepropionase (409 aa).

His70 and His72 together coordinate Fe(3+). His70 and His72 together coordinate Zn(2+). Residues Arg79, Tyr137, and His164 each coordinate 4-imidazolone-5-propanoate. Residue Tyr137 coordinates N-formimidoyl-L-glutamate. Residue His225 participates in Fe(3+) binding. His225 lines the Zn(2+) pocket. Residue Gln228 participates in 4-imidazolone-5-propanoate binding. N-formimidoyl-L-glutamate-binding residues include Asn314 and Gly316. Thr317 is a 4-imidazolone-5-propanoate binding site.

The protein belongs to the metallo-dependent hydrolases superfamily. HutI family. It depends on Zn(2+) as a cofactor. Requires Fe(3+) as cofactor.

The protein resides in the cytoplasm. It catalyses the reaction 4-imidazolone-5-propanoate + H2O = N-formimidoyl-L-glutamate. Its pathway is amino-acid degradation; L-histidine degradation into L-glutamate; N-formimidoyl-L-glutamate from L-histidine: step 3/3. Functionally, catalyzes the hydrolytic cleavage of the carbon-nitrogen bond in imidazolone-5-propanoate to yield N-formimidoyl-L-glutamate. It is the third step in the universal histidine degradation pathway. The protein is Imidazolonepropionase of Paenarthrobacter aurescens (strain TC1).